The chain runs to 258 residues: Aspartate/glutamate leucyltransferase (258 aa).

It belongs to the R-transferase family. Bpt subfamily.

It is found in the cytoplasm. It catalyses the reaction N-terminal L-glutamyl-[protein] + L-leucyl-tRNA(Leu) = N-terminal L-leucyl-L-glutamyl-[protein] + tRNA(Leu) + H(+). The enzyme catalyses N-terminal L-aspartyl-[protein] + L-leucyl-tRNA(Leu) = N-terminal L-leucyl-L-aspartyl-[protein] + tRNA(Leu) + H(+). Functionally, functions in the N-end rule pathway of protein degradation where it conjugates Leu from its aminoacyl-tRNA to the N-termini of proteins containing an N-terminal aspartate or glutamate. In Rhizobium etli (strain ATCC 51251 / DSM 11541 / JCM 21823 / NBRC 15573 / CFN 42), this protein is Aspartate/glutamate leucyltransferase.